The primary structure comprises 367 residues: Peptide chain release factor 1 (367 aa).

Position 238 is an N5-methylglutamine (Gln238).

The protein belongs to the prokaryotic/mitochondrial release factor family. Post-translationally, methylated by PrmC. Methylation increases the termination efficiency of RF1.

The protein resides in the cytoplasm. Functionally, peptide chain release factor 1 directs the termination of translation in response to the peptide chain termination codons UAG and UAA. The protein is Peptide chain release factor 1 of Dictyoglomus thermophilum (strain ATCC 35947 / DSM 3960 / H-6-12).